Here is a 545-residue protein sequence, read N- to C-terminus: Autoimmune regulator (545 aa).

Positions 1-105 (MATDAALRRL…ILDSFPKDVD (105 aa)) constitute an HSR domain. 2 consecutive short sequence motifs (LXXLL motif) follow at residues 7 to 11 (LRRLL) and 63 to 67 (LSWLL). Disordered stretches follow at residues 101–178 (PKDV…LPLG) and 234–290 (SKFE…SDPQ). Residues 116-128 (PAVPKALVPPPRL) are compositionally biased toward pro residues. A compositionally biased stretch (low complexity) spans 140-152 (AAAPAALTPRGTA). Residues 181–280 (IQTMSASVQR…ARLGQQGSVP (100 aa)) enclose the SAND domain. Interaction with histone H3 not methylated at 'Lys-4' regions lie at residues 295 to 298 (NEDE), 304 to 312 (DGGELICCD), and 331 to 335 (PSGTW). The segment at 296-343 (EDECAVCRDGGELICCDGCPRAFHLACLSPPLREIPSGTWRCSSCLQA) adopts a PHD-type 1 zinc-finger fold. Residues 348–382 (VQPRAEEPRPQEPPVETPLPPGLRSAGEEVRGPPG) form a disordered region. Pro residues predominate over residues 358-368 (QEPPVETPLPP). The LXXLL motif 3 motif lies at 414 to 418 (LHPLL). A PHD-type 2 zinc finger spans residues 434 to 475 (CGVCGDGTDVLRCTHCAAAFHWRCHFPAGTSRPGTGLRCRSC). The interval 489–508 (APSPARLAPGPAKDDTASHE) is disordered. Residues 516-520 (LESLL) carry the LXXLL motif 4 motif.

Homodimer and homotetramer. Interacts with CREBBP. Interacts preferentially with histone H3 that is not methylated at 'Lys-4'. Binds with lower affinity to histone H3 that is monomethylated at 'Lys-4'. Trimethylation of histone H3 at 'Lys-4' or phosphorylation at 'Thr-3' abolish the interaction. Binds with lower affinity to histone H3 that is acetylated at 'Lys-4', or that is acetylated at 'Lys-9' or trimethylated at 'Lys-9'. Binds histone H3 that is dimethylated at 'Arg-2' with very low affinity. Phosphorylated. Phosphorylation could trigger oligomerization. Widely expressed. Expressed at higher level in thymus (medullary epithelial cells and monocyte-dendritic cells), pancreas, adrenal cortex and testis. Expressed at lower level in the spleen, fetal liver and lymph nodes. In secondary lymphoid organs, expressed in a discrete population of bone marrow-derived toleregenic antigen presenting cells (APCs) called extrathymic AIRE expressing cells (eTAC)(at protein level). Isoform 2 and isoform 3 seem to be less frequently expressed than isoform 1, if at all.

The protein localises to the nucleus. It localises to the cytoplasm. Transcription factor playing an essential role to promote self-tolerance in the thymus by regulating the expression of a wide array of self-antigens that have the commonality of being tissue-restricted in their expression pattern in the periphery, called tissue restricted antigens (TRA). Binds to G-doublets in an A/T-rich environment; the preferred motif is a tandem repeat of 5'-ATTGGTTA-3' combined with a 5'-TTATTA-3' box. Binds to nucleosomes. Binds to chromatin and interacts selectively with histone H3 that is not methylated at 'Lys-4', not phosphorylated at 'Thr-3' and not methylated at 'Arg-2'. Functions as a sensor of histone H3 modifications that are important for the epigenetic regulation of gene expression. Mainly expressed by medullary thymic epithelial cells (mTECs), induces the expression of thousands of tissue-restricted proteins, which are presented on major histocompatibility complex class I (MHC-I) and MHC-II molecules to developing T-cells percolating through the thymic medulla. Also induces self-tolerance through other mechanisms such as the regulation of the mTEC differentiation program. Controls the medullary accumulation of thymic dendritic cells and the development of regulatory T-cell through the regulation of XCL1 expression. Regulates the production of CCR4 and CCR7 ligands in medullary thymic epithelial cells and alters the coordinated maturation and migration of thymocytes. In thimic B-cells, allows the presentation of licensing-dependent endogenous self-anitgen for negative selection. In secondary lymphoid organs, induces functional inactivation of CD4(+) T-cells. Expressed by a distinct bone marrow-derived population, induces self-tolerance through a mechanism that does not require regulatory T-cells and is resitant to innate inflammatory stimuli. This chain is Autoimmune regulator (AIRE), found in Homo sapiens (Human).